A 151-amino-acid polypeptide reads, in one-letter code: Large ribosomal subunit protein bL9 (151 aa).

Belongs to the bacterial ribosomal protein bL9 family.

In terms of biological role, binds to the 23S rRNA. This chain is Large ribosomal subunit protein bL9, found in Bordetella pertussis (strain Tohama I / ATCC BAA-589 / NCTC 13251).